The sequence spans 346 residues: Serine/threonine-protein phosphatase PP1(4.8) (346 aa).

A disordered region spans residues Q46–T65. 4 residues coordinate Mn(2+): D102, H104, D130, and N162. H163 (proton donor) is an active-site residue. Residues H211 and H287 each contribute to the Mn(2+) site.

Belongs to the PPP phosphatase family. PP-1 subfamily. The cofactor is Mn(2+).

It carries out the reaction O-phospho-L-seryl-[protein] + H2O = L-seryl-[protein] + phosphate. It catalyses the reaction O-phospho-L-threonyl-[protein] + H2O = L-threonyl-[protein] + phosphate. In Trypanosoma brucei brucei, this protein is Serine/threonine-protein phosphatase PP1(4.8).